We begin with the raw amino-acid sequence, 183 residues long: Adenine phosphoribosyltransferase (183 aa).

The protein belongs to the purine/pyrimidine phosphoribosyltransferase family. In terms of assembly, homodimer.

The protein localises to the cytoplasm. The catalysed reaction is AMP + diphosphate = 5-phospho-alpha-D-ribose 1-diphosphate + adenine. It functions in the pathway purine metabolism; AMP biosynthesis via salvage pathway; AMP from adenine: step 1/1. In terms of biological role, catalyzes a salvage reaction resulting in the formation of AMP, that is energically less costly than de novo synthesis. The protein is Adenine phosphoribosyltransferase of Salmonella arizonae (strain ATCC BAA-731 / CDC346-86 / RSK2980).